The chain runs to 214 residues: Protein PAM68, chloroplastic (214 aa).

Disordered stretches follow at residues 1 to 26 (MASV…NNKQ) and 62 to 111 (ATMN…ERGV). The N-terminal 35 residues, 1 to 35 (MASVPCSFKLSAHRRSSSKLDGNNKQCSSLVERLR), are a transit peptide targeting the chloroplast. Over 36 to 124 (DKTKSQVPKS…IVTNRMISRM (89 aa)) the chain is Stromal. Basic residues predominate over residues 75 to 84 (KKTKKSKKPK). Residues 89–106 (SDEDDDDEDEDDDDEEDE) show a composition bias toward acidic residues. The helical transmembrane segment at 125–145 (GFTVGLPLFIGLLFFPFFYYL) threads the bilayer. The Lumenal, thylakoid segment spans residues 146–152 (KVGLKVD). A helical transmembrane segment spans residues 153-173 (VPTWVPFIVSFVFFGTALAGV). Residues 174 to 214 (SYGIVSSSWDPLREGSLLGWNEAKKNWPVFWQSFWNSSDKR) lie on the Stromal side of the membrane.

Interacts with the PSII subunits psbA, psbB, psbC, psbD, psbH and psbI, but not with psbE, psbF or psbO. Interacts with the PSII assembly factors HCF136, LPA1, LPA2 and ALB3.

The protein resides in the plastid. Its subcellular location is the chloroplast thylakoid membrane. Functionally, involved in early steps in photosystem II (PSII) biogenesis and in maturation and stability of newly synthesized psbA protein. This is Protein PAM68, chloroplastic (PAM68) from Arabidopsis thaliana (Mouse-ear cress).